The sequence spans 134 residues: Ribonuclease VapC (134 aa).

Positions 4–124 (IVDTSIIIAL…NTKDFKRIPE (121 aa)) constitute a PINc domain. Aspartate 6 contacts Mg(2+).

This sequence belongs to the PINc/VapC protein family. Mg(2+) serves as cofactor.

Its function is as follows. Toxic component of a type II toxin-antitoxin (TA) system. Has ssRNase activity. Its RNase activity is partially neutralized by cognate antitoxin VapB. Rapidly induces apoptosis upon microinjection into mouse fibroblasts (L929 line). Probably contributes to host cell death if bacterial cell lysis occurs during host infection. The polypeptide is Ribonuclease VapC (Rickettsia bellii (strain RML369-C)).